The sequence spans 444 residues: Glutamyl-tRNA reductase (444 aa).

Substrate contacts are provided by residues 49–52 (TCNR), Ser109, 114–116 (ETQ), and Gln120. Residue Cys50 is the Nucleophile of the active site. Residue 189–194 (GAGKMG) coordinates NADP(+).

Belongs to the glutamyl-tRNA reductase family. As to quaternary structure, homodimer.

The catalysed reaction is (S)-4-amino-5-oxopentanoate + tRNA(Glu) + NADP(+) = L-glutamyl-tRNA(Glu) + NADPH + H(+). It functions in the pathway porphyrin-containing compound metabolism; protoporphyrin-IX biosynthesis; 5-aminolevulinate from L-glutamyl-tRNA(Glu): step 1/2. In terms of biological role, catalyzes the NADPH-dependent reduction of glutamyl-tRNA(Glu) to glutamate 1-semialdehyde (GSA). The sequence is that of Glutamyl-tRNA reductase from Bacillus cereus (strain ATCC 10987 / NRS 248).